The primary structure comprises 769 residues: Integrin beta-2 (769 aa).

The first 22 residues, 1 to 22 (MLCRCSPLLLLVGLLTLRSALS), serve as a signal peptide directing secretion. Position 23 is a pyrrolidone carboxylic acid (Gln23). At 23–700 (QECAKYKVST…ETRECVKGPN (678 aa)) the chain is on the extracellular side. Positions 24 to 74 (ECAKYKVSTCRDCIESGPGCAWCQKLNFSGQGEPDSVRCDTREQLLAKGCV) constitute a PSI domain. Intrachain disulfides connect Cys25–Cys43, Cys33–Cys447, Cys36–Cys62, Cys46–Cys73, Cys191–Cys198, Cys246–Cys286, Cys386–Cys400, Cys420–Cys445, Cys449–Cys467, Cys459–Cys470, Cys472–Cys481, Cys483–Cys514, Cys497–Cys512, Cys506–Cys517, Cys519–Cys534, Cys536–Cys559, Cys541–Cys557, Cys549–Cys562, Cys564–Cys573, Cys575–Cys598, Cys582–Cys596, Cys590–Cys601, Cys603–Cys612, Cys615–Cys618, Cys622–Cys662, Cys628–Cys647, Cys631–Cys643, and Cys670–Cys695. Asn50 and Asn116 each carry an N-linked (GlcNAc...) asparagine glycan. Residues 124–363 (GYPIDLYYLM…ELIKNAYNKL (240 aa)) enclose the VWFA domain. Residues Ser136 and Ser138 each coordinate Mg(2+). Ca(2+) contacts are provided by Ser138, Asp141, Asp142, and Asp173. Ca(2+) contacts are provided by Asn229, Asp231, Pro233, and Glu234. Mg(2+) is bound at residue Glu234. An N-linked (GlcNAc...) asparagine glycan is attached at Asn254. Residues Asp264 and Glu347 each contribute to the Ca(2+) site. The short motif at 397–399 (RGD) is the Cell attachment site element. I-EGF domains lie at 449-482 (CGDS…KHCE), 483-535 (CQTQ…QFCE), 536-574 (CDNM…SACQ), and 575-613 (CLKS…PLCT). Asn501 carries N-linked (GlcNAc...) asparagine glycosylation. An N-linked (GlcNAc...) asparagine glycan is attached at Asn642. Residues 701–723 (IAAIVGGTVGGVVLVGIFLLVIW) traverse the membrane as a helical segment. The Cytoplasmic segment spans residues 724-769 (KVLTHLSDLREYKRFEKEKLKSQWNNDNPLFKSATTTVMNPKFAER). A phosphoserine mark is found at Ser745 and Ser756. 2 positions are modified to phosphothreonine: Thr758 and Thr760.

This sequence belongs to the integrin beta chain family. In terms of assembly, heterodimer of an alpha and a beta subunit. The ITGB2 beta subunit associates with the ITGAL, ITGAM, ITGAX or ITGAD alpha subunits. Found in a complex with CD177 and ITGAM/CD11b. Interacts with FGR. Interacts with COPS5 and RANBP9. Interacts with FLNA (via filamin repeats 4, 9, 12, 17, 19, 21, and 23). Interacts with THBD. In terms of processing, both Ser-745 and Ser-756 become phosphorylated when T-cells are exposed to phorbol esters. Phosphorylation on Thr-758 (but not on Ser-756) allows interaction with 14-3-3 proteins.

It is found in the cell membrane. The protein localises to the membrane raft. Its function is as follows. Integrin ITGAL/ITGB2 is a receptor for ICAM1, ICAM2, ICAM3 and ICAM4. Integrin ITGAL/ITGB2 is also a receptor for the secreted form of ubiquitin-like protein ISG15; the interaction is mediated by ITGAL. Integrins ITGAM/ITGB2 and ITGAX/ITGB2 are receptors for the iC3b fragment of the third complement component and for fibrinogen. Integrin ITGAX/ITGB2 recognizes the sequence G-P-R in fibrinogen alpha-chain. Integrin ITGAM/ITGB2 recognizes P1 and P2 peptides of fibrinogen gamma chain. Integrin ITGAM/ITGB2 is also a receptor for factor X. Integrin ITGAD/ITGB2 is a receptor for ICAM3 and VCAM1. Contributes to natural killer cell cytotoxicity. Involved in leukocyte adhesion and transmigration of leukocytes including T-cells and neutrophils. Triggers neutrophil transmigration during lung injury through PTK2B/PYK2-mediated activation. Integrin alpha-L/beta-2 in association with ICAM3, contributes to apoptotic neutrophil phagocytosis by macrophages. The polypeptide is Integrin beta-2 (ITGB2) (Sus scrofa (Pig)).